The following is a 431-amino-acid chain: Na(+)-translocating NADH-quinone reductase subunit F (431 aa).

The chain crosses the membrane as a helical span at residues 10 to 30; the sequence is ISIASLVFCVIGLILSGVILI. The 93-residue stretch at 41–133 folds into the 2Fe-2S ferredoxin-type domain; sequence CKLKINNDDS…DMNLEIEERY (93 aa). Residues Cys-76, Cys-82, Cys-85, and Cys-117 each coordinate [2Fe-2S] cluster. The 151-residue stretch at 136 to 286 folds into the FAD-binding FR-type domain; the sequence is ASSWEGTVVS…SGPYGESFMK (151 aa).

The protein belongs to the NqrF family. Composed of six subunits; NqrA, NqrB, NqrC, NqrD, NqrE and NqrF. Requires [2Fe-2S] cluster as cofactor. FAD serves as cofactor.

It localises to the cell inner membrane. The catalysed reaction is a ubiquinone + n Na(+)(in) + NADH + H(+) = a ubiquinol + n Na(+)(out) + NAD(+). NQR complex catalyzes the reduction of ubiquinone-1 to ubiquinol by two successive reactions, coupled with the transport of Na(+) ions from the cytoplasm to the periplasm. The first step is catalyzed by NqrF, which accepts electrons from NADH and reduces ubiquinone-1 to ubisemiquinone by a one-electron transfer pathway. In Chlamydia felis (strain Fe/C-56) (Chlamydophila felis), this protein is Na(+)-translocating NADH-quinone reductase subunit F.